A 333-amino-acid polypeptide reads, in one-letter code: HTH-type transcriptional repressor PurR (333 aa).

The HTH lacI-type domain occupies 2 to 56 (ATIKDVAKMAGVSTTTVSHVINKTRFVAKETEQQVLQAIKNLNYSPSAVARSLKV). A DNA-binding region (H-T-H motif) is located at residues 4-23 (IKDVAKMAGVSTTTVSHVIN). A DNA-binding region spans residues 48 to 56 (SAVARSLKV). Tyrosine 73, lysine 189, threonine 191, phenylalanine 220, and aspartate 274 together coordinate hypoxanthine.

In terms of assembly, homodimer.

Its pathway is purine metabolism; purine nucleotide biosynthesis [regulation]. Functionally, is the main repressor of the genes involved in the de novo synthesis of purine nucleotides, regulating purB, purC, purEK, purF, purHD, purL, purMN and guaBA expression. PurR is allosterically activated to bind its cognate DNA by binding the purine corepressors, hypoxanthine or guanine, thereby effecting transcription repression. The polypeptide is HTH-type transcriptional repressor PurR (Histophilus somni (strain 129Pt) (Haemophilus somnus)).